The primary structure comprises 238 residues: uncharacterized protein (238 aa).

Transmembrane regions (helical) follow at residues Met-6–Ile-26, Phe-45–Leu-65, Ile-98–Ile-118, Ile-160–Leu-180, and Ile-186–Ala-206.

This sequence belongs to the TMEM19 family.

It localises to the cell membrane. This is an uncharacterized protein from Methanocaldococcus jannaschii (strain ATCC 43067 / DSM 2661 / JAL-1 / JCM 10045 / NBRC 100440) (Methanococcus jannaschii).